The sequence spans 218 residues: Small ribosomal subunit protein uS3c (218 aa).

In terms of domain architecture, KH type-2 spans 43-118 (IKNYVQKNTK…KFNIAITKIA (76 aa)).

It belongs to the universal ribosomal protein uS3 family. As to quaternary structure, part of the 30S ribosomal subunit.

The protein localises to the plastid. It localises to the chloroplast. This chain is Small ribosomal subunit protein uS3c (rps3), found in Coffea arabica (Arabian coffee).